The primary structure comprises 211 residues: Imidazole glycerol phosphate synthase subunit HisH (211 aa).

Residues 3–211 enclose the Glutamine amidotransferase type-1 domain; it reads VIAVIDYDMG…VNQIRVKAIA (209 aa). Cys81 acts as the Nucleophile in catalysis. Residues His186 and Glu188 contribute to the active site.

In terms of assembly, heterodimer of HisH and HisF.

The protein localises to the cytoplasm. It catalyses the reaction 5-[(5-phospho-1-deoxy-D-ribulos-1-ylimino)methylamino]-1-(5-phospho-beta-D-ribosyl)imidazole-4-carboxamide + L-glutamine = D-erythro-1-(imidazol-4-yl)glycerol 3-phosphate + 5-amino-1-(5-phospho-beta-D-ribosyl)imidazole-4-carboxamide + L-glutamate + H(+). The enzyme catalyses L-glutamine + H2O = L-glutamate + NH4(+). It functions in the pathway amino-acid biosynthesis; L-histidine biosynthesis; L-histidine from 5-phospho-alpha-D-ribose 1-diphosphate: step 5/9. Functionally, IGPS catalyzes the conversion of PRFAR and glutamine to IGP, AICAR and glutamate. The HisH subunit catalyzes the hydrolysis of glutamine to glutamate and ammonia as part of the synthesis of IGP and AICAR. The resulting ammonia molecule is channeled to the active site of HisF. This Gloeothece citriformis (strain PCC 7424) (Cyanothece sp. (strain PCC 7424)) protein is Imidazole glycerol phosphate synthase subunit HisH.